We begin with the raw amino-acid sequence, 269 residues long: Rhamnulose-1-phosphate aldolase (269 aa).

Residue glutamate 119 is part of the active site. Zn(2+)-binding residues include histidine 142, histidine 144, and histidine 214.

This sequence belongs to the aldolase class II family. RhaD subfamily. Zn(2+) is required as a cofactor.

The protein resides in the cytoplasm. It catalyses the reaction L-rhamnulose 1-phosphate = (S)-lactaldehyde + dihydroxyacetone phosphate. It functions in the pathway carbohydrate degradation; L-rhamnose degradation; glycerone phosphate from L-rhamnose: step 3/3. Catalyzes the reversible cleavage of L-rhamnulose-1-phosphate to dihydroxyacetone phosphate (DHAP) and L-lactaldehyde. The protein is Rhamnulose-1-phosphate aldolase of Bacteroides thetaiotaomicron (strain ATCC 29148 / DSM 2079 / JCM 5827 / CCUG 10774 / NCTC 10582 / VPI-5482 / E50).